The sequence spans 267 residues: NAD kinase 1 (267 aa).

Asp45 acts as the Proton acceptor in catalysis. NAD(+)-binding positions include 45-46, 122-123, Arg149, Asp151, and Ala186; these read DG and NE.

Belongs to the NAD kinase family. It depends on a divalent metal cation as a cofactor.

It is found in the cytoplasm. The catalysed reaction is NAD(+) + ATP = ADP + NADP(+) + H(+). Its function is as follows. Involved in the regulation of the intracellular balance of NAD and NADP, and is a key enzyme in the biosynthesis of NADP. Catalyzes specifically the phosphorylation on 2'-hydroxyl of the adenosine moiety of NAD to yield NADP. This is NAD kinase 1 from Oceanobacillus iheyensis (strain DSM 14371 / CIP 107618 / JCM 11309 / KCTC 3954 / HTE831).